A 904-amino-acid polypeptide reads, in one-letter code: Translation initiation factor IF-2 (904 aa).

Disordered stretches follow at residues 134-248 and 267-315; these read RQRN…GSHV and HLSA…FERP. The span at 136–177 shows a compositional bias: basic and acidic residues; the sequence is RNLDEQQRLAESDRVRDEEIQRKRDEEQAAKDRAEAERKAAE. 2 stretches are compositionally biased toward low complexity: residues 178-230 and 285-303; these read EAAA…STPA and GRPGSSSSRRGNDNGRGSN. The tr-type G domain maps to 403 to 572; sequence TRPPVVTIMG…SLQAEVLELK (170 aa). The interval 412–419 is G1; the sequence is GHVDHGKT. GTP is bound at residue 412 to 419; it reads GHVDHGKT. A G2 region spans residues 437–441; sequence GITQH. Positions 458–461 are G3; sequence DTPG. Residues 458-462 and 512-515 each bind GTP; these read DTPGH and NKID. Positions 512–515 are G4; sequence NKID. Positions 548 to 550 are G5; that stretch reads SAK.

Belongs to the TRAFAC class translation factor GTPase superfamily. Classic translation factor GTPase family. IF-2 subfamily.

Its subcellular location is the cytoplasm. Functionally, one of the essential components for the initiation of protein synthesis. Protects formylmethionyl-tRNA from spontaneous hydrolysis and promotes its binding to the 30S ribosomal subunits. Also involved in the hydrolysis of GTP during the formation of the 70S ribosomal complex. This chain is Translation initiation factor IF-2, found in Xanthomonas oryzae pv. oryzae (strain PXO99A).